The primary structure comprises 257 residues: Acetylglutamate kinase (257 aa).

Residues 43–44, R65, and N157 each bind substrate; that span reads GG. ATP-binding positions include 180-185 and 208-210; these read DISGIL and IIT.

It belongs to the acetylglutamate kinase family. ArgB subfamily. Homodimer.

The protein resides in the cytoplasm. The enzyme catalyses N-acetyl-L-glutamate + ATP = N-acetyl-L-glutamyl 5-phosphate + ADP. It participates in amino-acid biosynthesis; L-arginine biosynthesis; N(2)-acetyl-L-ornithine from L-glutamate: step 2/4. In terms of biological role, catalyzes the ATP-dependent phosphorylation of N-acetyl-L-glutamate. This is Acetylglutamate kinase from Sodalis glossinidius (strain morsitans).